A 405-amino-acid polypeptide reads, in one-letter code: Tryptophan synthase beta chain (405 aa).

An N6-(pyridoxal phosphate)lysine modification is found at K98.

The protein belongs to the TrpB family. Tetramer of two alpha and two beta chains. It depends on pyridoxal 5'-phosphate as a cofactor.

The enzyme catalyses (1S,2R)-1-C-(indol-3-yl)glycerol 3-phosphate + L-serine = D-glyceraldehyde 3-phosphate + L-tryptophan + H2O. It functions in the pathway amino-acid biosynthesis; L-tryptophan biosynthesis; L-tryptophan from chorismate: step 5/5. The beta subunit is responsible for the synthesis of L-tryptophan from indole and L-serine. This is Tryptophan synthase beta chain from Xylella fastidiosa (strain M23).